The sequence spans 121 residues: Histone H2B (121 aa).

The tract at residues 1-27 (MAPKKAPAAAEKKVKKAPTTEKKNKKK) is disordered. Residue Ala-2 is modified to N,N,N-trimethylalanine. An N6-acetyllysine mark is found at Lys-5 and Lys-41. Residue Lys-115 forms a Glycyl lysine isopeptide (Lys-Gly) (interchain with G-Cter in ubiquitin) linkage.

Belongs to the histone H2B family. In terms of assembly, the nucleosome is a histone octamer containing two molecules each of H2A, H2B, H3 and H4 assembled in one H3-H4 heterotetramer and two H2A-H2B heterodimers. The octamer wraps approximately 147 bp of DNA. Monoubiquitination of Lys-115 gives a specific tag for epigenetic transcriptional activation and is also prerequisite for histone H3 'Lys-4' and 'Lys-79' methylation. In terms of processing, acetylation occurs almost exclusively in the MAC.

The protein localises to the nucleus. It is found in the chromosome. Its function is as follows. Core component of nucleosome. Nucleosomes wrap and compact DNA into chromatin, limiting DNA accessibility to the cellular machineries which require DNA as a template. Histones thereby play a central role in transcription regulation, DNA repair, DNA replication and chromosomal stability. DNA accessibility is regulated via a complex set of post-translational modifications of histones, also called histone code, and nucleosome remodeling. The chain is Histone H2B from Tetrahymena pyriformis.